Here is a 183-residue protein sequence, read N- to C-terminus: ATP synthase subunit delta (183 aa).

This sequence belongs to the ATPase delta chain family. As to quaternary structure, F-type ATPases have 2 components, F(1) - the catalytic core - and F(0) - the membrane proton channel. F(1) has five subunits: alpha(3), beta(3), gamma(1), delta(1), epsilon(1). F(0) has three main subunits: a(1), b(2) and c(10-14). The alpha and beta chains form an alternating ring which encloses part of the gamma chain. F(1) is attached to F(0) by a central stalk formed by the gamma and epsilon chains, while a peripheral stalk is formed by the delta and b chains.

It is found in the cell inner membrane. Functionally, f(1)F(0) ATP synthase produces ATP from ADP in the presence of a proton or sodium gradient. F-type ATPases consist of two structural domains, F(1) containing the extramembraneous catalytic core and F(0) containing the membrane proton channel, linked together by a central stalk and a peripheral stalk. During catalysis, ATP synthesis in the catalytic domain of F(1) is coupled via a rotary mechanism of the central stalk subunits to proton translocation. Its function is as follows. This protein is part of the stalk that links CF(0) to CF(1). It either transmits conformational changes from CF(0) to CF(1) or is implicated in proton conduction. This Thermotoga maritima (strain ATCC 43589 / DSM 3109 / JCM 10099 / NBRC 100826 / MSB8) protein is ATP synthase subunit delta.